The sequence spans 269 residues: E3 ubiquitin-protein ligase complex slx8-rfp subunit slx8 (269 aa).

Positions methionine 1–asparagine 10 are enriched in basic and acidic residues. Disordered regions lie at residues methionine 1–alanine 75 and proline 166–proline 196. Residues proline 60–leucine 70 show a composition bias toward polar residues. Residues cysteine 206–arginine 247 form an RING-type zinc finger.

In terms of assembly, part of an E3 ubiquitin complex including rfp1, rfp2 and slx8. Interacts with rfp1 and rfp2.

It is found in the nucleus. The catalysed reaction is S-ubiquitinyl-[E2 ubiquitin-conjugating enzyme]-L-cysteine + [acceptor protein]-L-lysine = [E2 ubiquitin-conjugating enzyme]-L-cysteine + N(6)-ubiquitinyl-[acceptor protein]-L-lysine.. It functions in the pathway protein modification; protein ubiquitination. Functionally, mediates ubiquitination and subsequent desumoylation/degradation of sumoylated proteins and proteins containing SUMO-like domains. Acts as a critical suppressor of gross chromosomal rearrangements (GCRs) during normal cell cycle progression. Involved in stabilizing, restarting or resolving transiently stalled replication forks. Prevents accumulation of DNA damage during cell cycle progression. In Schizosaccharomyces pombe (strain 972 / ATCC 24843) (Fission yeast), this protein is E3 ubiquitin-protein ligase complex slx8-rfp subunit slx8 (slx8).